The sequence spans 985 residues: Guanine nucleotide exchange protein smcr8b (985 aa).

Positions 47-225 (ISSAKLKKDF…VKCSSEREPI (179 aa)) constitute a uDENN FLCN/SMCR8-type domain. The span at 242–292 (NEKSSHTDEISPQEKDGCGNSRKVEVKLENENRSHFEHEQYGKQRKDKPDK) shows a compositional bias: basic and acidic residues. 3 disordered regions span residues 242-301 (NEKS…PLAN), 502-528 (QSQV…SPAE), and 639-659 (EESP…EDNN). Residues 390 to 895 (RLKTLEELCD…LINLLVEPKS (506 aa)) enclose the cDENN FLCN/SMCR8-type domain. The segment covering 502–514 (QSQVQHSTLNTPS) has biased composition (polar residues). Residues 904–962 (FTFAQSVQSKLVTKAFLLTFSHGHPSPSRPQGSSGTECFLSELHTDDKKILRYLSELIK) enclose the dDENN FLCN/SMCR8-type domain.

The protein belongs to the SMCR8 family. As to quaternary structure, component of the C9orf72-SMCR8 complex. The C9orf72-SMCR8 complex associates with the ATG1/ULK1 kinase complex.

It is found in the cytoplasm. Its subcellular location is the nucleus. Functionally, component of the C9orf72-SMCR8 complex, a complex that has guanine nucleotide exchange factor (GEF) activity and regulates autophagy. In the complex, C9orf72 and SMCR8 probably constitute the catalytic subunits that promote the exchange of GDP to GTP, converting inactive GDP-bound RAB8A and RAB39B into their active GTP-bound form, thereby promoting autophagosome maturation. The C9orf72-SMCR8 complex also acts as a negative regulator of autophagy initiation by interacting with the ATG1/ULK1 kinase complex and inhibiting its protein kinase activity. In Danio rerio (Zebrafish), this protein is Guanine nucleotide exchange protein smcr8b (smcr8b).